Reading from the N-terminus, the 1077-residue chain is Carbamoyl phosphate synthase large chain (1077 aa).

Residues 2–403 (PKRTDIKSIL…SLQKALRGLE (402 aa)) form a carboxyphosphate synthetic domain region. ATP contacts are provided by Arg129, Arg169, Gly175, Gly176, Glu208, Leu210, Glu215, Gly241, Ile242, His243, Gln285, and Glu299. One can recognise an ATP-grasp 1 domain in the interval 133–328 (DIAMKKIGLD…IAKIAAKLAV (196 aa)). The Mg(2+) site is built by Gln285, Glu299, and Asn301. Mn(2+) is bound by residues Gln285, Glu299, and Asn301. The oligomerization domain stretch occupies residues 404-553 (VGATGFDPKV…YSTYEEECES (150 aa)). The carbamoyl phosphate synthetic domain stretch occupies residues 554–936 (NPTSDRPKVM…AFSKAMLGSQ (383 aa)). Residues 679 to 870 (QQAVNRLGLK…LAKIAARVMV (192 aa)) enclose the ATP-grasp 2 domain. ATP is bound by residues Arg715, Arg754, Leu756, Glu761, Gly786, Val787, His788, Ser789, Gln829, and Glu841. Residues Gln829, Glu841, and Asn843 each contribute to the Mg(2+) site. Positions 829, 841, and 843 each coordinate Mn(2+). Residues 937-1077 (SGMKKSGRAL…MHAKIKNMKA (141 aa)) enclose the MGS-like domain. An allosteric domain region spans residues 937 to 1077 (SGMKKSGRAL…MHAKIKNMKA (141 aa)).

The protein belongs to the CarB family. As to quaternary structure, composed of two chains; the small (or glutamine) chain promotes the hydrolysis of glutamine to ammonia, which is used by the large (or ammonia) chain to synthesize carbamoyl phosphate. Tetramer of heterodimers (alpha,beta)4. Requires Mg(2+) as cofactor. Mn(2+) serves as cofactor.

It catalyses the reaction hydrogencarbonate + L-glutamine + 2 ATP + H2O = carbamoyl phosphate + L-glutamate + 2 ADP + phosphate + 2 H(+). The enzyme catalyses hydrogencarbonate + NH4(+) + 2 ATP = carbamoyl phosphate + 2 ADP + phosphate + 2 H(+). It participates in amino-acid biosynthesis; L-arginine biosynthesis; carbamoyl phosphate from bicarbonate: step 1/1. The protein operates within pyrimidine metabolism; UMP biosynthesis via de novo pathway; (S)-dihydroorotate from bicarbonate: step 1/3. Large subunit of the glutamine-dependent carbamoyl phosphate synthetase (CPSase). CPSase catalyzes the formation of carbamoyl phosphate from the ammonia moiety of glutamine, carbonate, and phosphate donated by ATP, constituting the first step of 2 biosynthetic pathways, one leading to arginine and/or urea and the other to pyrimidine nucleotides. The large subunit (synthetase) binds the substrates ammonia (free or transferred from glutamine from the small subunit), hydrogencarbonate and ATP and carries out an ATP-coupled ligase reaction, activating hydrogencarbonate by forming carboxy phosphate which reacts with ammonia to form carbamoyl phosphate. The polypeptide is Carbamoyl phosphate synthase large chain (Yersinia pestis).